Consider the following 694-residue polypeptide: Putative bifunctional polynucleotide kinase/RNA ligase (694 aa).

The segment at 1–385 (MLHVSRLLAN…TKQALNNKLA (385 aa)) is ligase domain. Residues 394 to 694 (KQLLVLIGIS…FNVCRDYLEF (301 aa)) form a bifunctional 5'-OH polynucleotide kinase/polynucleotide 3'-phosphatase region. 401–408 (GISGSGKS) is a binding site for ATP.

It catalyses the reaction a 5'-end dephospho-2'-deoxyribonucleoside-DNA + ATP = a 5'-end 5'-phospho-2'-deoxyribonucleoside-DNA + ADP + H(+). It carries out the reaction ATP + (ribonucleotide)n-3'-hydroxyl + 5'-phospho-(ribonucleotide)m = (ribonucleotide)n+m + AMP + diphosphate.. Trifunctional enzyme that possesses a bifunctional polynucleotide kinase/phosphatase activity and an ATP-dependent RNA ligase activity. May therefore play a role to evade an RNA damage-based host response. The chain is Putative bifunctional polynucleotide kinase/RNA ligase (PNK/PNL) from Autographa californica nuclear polyhedrosis virus (AcMNPV).